A 155-amino-acid polypeptide reads, in one-letter code: MRRRKAPVREVLGDPVYGNKVVTKFINKMMYDGKKSVAEKIIYKAFNKIEEKSGEKGIEVFEKALERVRPLVEVRSRRVGGATYQVPVEVRASRQQSLSIRWILEATRKRNERMMVDRLANELMDAASDKGAAFKKKEDVHKMAEANKAFAHYRW.

This sequence belongs to the universal ribosomal protein uS7 family. Part of the 30S ribosomal subunit. Contacts proteins S9 and S11.

In terms of biological role, one of the primary rRNA binding proteins, it binds directly to 16S rRNA where it nucleates assembly of the head domain of the 30S subunit. Is located at the subunit interface close to the decoding center, probably blocks exit of the E-site tRNA. This is Small ribosomal subunit protein uS7 from Helicobacter pylori (strain Shi470).